The primary structure comprises 626 residues: Grainyhead-like protein 3 homolog (626 aa).

The segment at 30-95 is transcription activation; sequence EAWKTYLENP…QGKRYYHGME (66 aa). The region spanning 226-460 is the Grh/CP2 DB domain; the sequence is SLKSDFEYTL…DLETPPVLFI (235 aa).

It belongs to the grh/CP2 family. Grainyhead subfamily. As to quaternary structure, homodimer, also forms heterodimers with GRHL1 and GRHL2. Interacts with LMO4. As to expression, expressed in brain, colon, pancreas, placenta and kidney. Isoform 1 is expressed in lung and tonsil. Isoform 2 is prostate-specific.

Its subcellular location is the nucleus. Its function is as follows. Transcription factor playing important roles in primary neurulation and in the differentiation of stratified epithelia of both ectodermal and endodermal origin. Binds directly to the consensus DNA sequence 5'-AACCGGTT-3' acting as an activator and repressor on distinct target genes. xhibits functional redundancy with GRHL2 in epidermal morphogenetic events and epidermal wound repair. Exhibits functional redundancy with GRHL2 in epidermal morphogenetic events and epidermal wound repair but is essential to form the epidermal barrier with TGM3 as critical direct target gene among others. Despite being dispensable during normal epidermal homeostasis in the adulthood, is again required for barrier repair after immune-mediated epidermal damage, regulates distinct gene batteries in embryonic epidermal differentiation and adult epidermal barrier reformation after injury. Plays unique and cooperative roles with GRHL2 in establishing distinct zones of primary neurulation. Essential for spinal closure, functions cooperatively with GRHL2 in closure 2 (forebrain/midbrain boundary) and posterior neuropore closure. Also required for proper development of the oral periderm. No genetic interaction with GRHL3, no functional cooperativity due to diverse target gene selectivity. The sequence is that of Grainyhead-like protein 3 homolog from Homo sapiens (Human).